Consider the following 349-residue polypeptide: GMP reductase (349 aa).

108–131 (IDFLKIKKIFLLSSELKYICIDVA) is a binding site for NADP(+). 2 residues coordinate K(+): Gly-181 and Gly-183. The active-site Thioimidate intermediate is the Cys-186. 216–239 (IISDGGCTVSGDIAKAFGGGADFV) contacts NADP(+).

Belongs to the IMPDH/GMPR family. GuaC type 1 subfamily. As to quaternary structure, homotetramer.

The enzyme catalyses IMP + NH4(+) + NADP(+) = GMP + NADPH + 2 H(+). Catalyzes the irreversible NADPH-dependent deamination of GMP to IMP. It functions in the conversion of nucleobase, nucleoside and nucleotide derivatives of G to A nucleotides, and in maintaining the intracellular balance of A and G nucleotides. This chain is GMP reductase, found in Buchnera aphidicola subsp. Acyrthosiphon pisum (strain Tuc7).